The primary structure comprises 119 residues: Large ribosomal subunit protein uL14 (119 aa).

This sequence belongs to the universal ribosomal protein uL14 family. As to quaternary structure, part of the 50S ribosomal subunit. Forms a cluster with proteins L3 and L19. In the 70S ribosome, L14 and L19 interact and together make contacts with the 16S rRNA in bridges B5 and B8.

Its function is as follows. Binds to 23S rRNA. Forms part of two intersubunit bridges in the 70S ribosome. The sequence is that of Large ribosomal subunit protein uL14 from Anaplasma phagocytophilum (strain HZ).